Consider the following 776-residue polypeptide: GATOR2 complex protein Wdr24 (776 aa).

6 WD repeats span residues 63–103 (NLSY…RQKQ), 109–149 (EHER…SINT), 152–192 (CNSE…KCMV), 196–235 (AHYG…GLEH), 238–280 (HTIA…IPFA), and 284–326 (EHTN…ALKA). The segment at 466–490 (HRSSFSNQKNPMNSRRATQVASDWP) is disordered. The span at 469 to 490 (SFSNQKNPMNSRRATQVASDWP) shows a compositional bias: polar residues. A C4-type zinc finger spans residues 703–726 (NCGECGRPMGGKVGWYCDKCKSMQ). Zn(2+)-binding residues include Cys-704, Cys-707, Cys-719, Cys-722, Cys-730, Cys-733, Cys-744, Cys-747, His-749, His-752, His-755, Cys-766, Cys-769, His-771, and Cys-773. The RING-type; atypical zinc finger occupies 728–776 (AKCCVCGLIVRGVYAWCQGCSHGGHIEHLQKYFAKHSKCPKCGHLCAYS).

Belongs to the WD repeat WDR24 family. As to quaternary structure, component of the GATOR complex consisting of mio, Nup44A/Seh1, Im11, Nplr3, Nplr2, Wdr24, Wdr59 and Sec13. Within the GATOR complex, probable component of the GATOR2 subcomplex which is likely composed of mio, Nup44A/Seh1, Wdr24, Wdr59 and Sec13. Interacts with Nup44A/Seh1. Interacts with mio. Interacts with Nplr3. The GATOR2 complex associates with unmet in the absence of S-adenosyl-L-methionine; the mio-Wdr24-Nup44A subcomplex is essential and sufficient for this interaction while Wdr59 and Sec13 are dispensable. This association acts as a nutrient sensor to inhibit mTORC1 signaling in the absence of methionine.

It is found in the lysosome. It localises to the cytoplasmic vesicle. The protein resides in the autophagosome. It carries out the reaction S-ubiquitinyl-[E2 ubiquitin-conjugating enzyme]-L-cysteine + [acceptor protein]-L-lysine = [E2 ubiquitin-conjugating enzyme]-L-cysteine + N(6)-ubiquitinyl-[acceptor protein]-L-lysine.. Its pathway is protein modification; protein ubiquitination. Functionally, an essential component of the GATOR subcomplex GATOR2 which functions as an activator of the amino acid-sensing branch of the mTORC1 signaling pathway. The two GATOR subcomplexes, GATOR1 and GATOR2, regulate the mTORC1 pathway in order to mediate metabolic homeostasis, female gametogenesis and the response to amino acid limitation and complete starvation. GATOR2 activates the mTORC1 signaling pathway through the inhibition of the GATOR1 subcomplex, controlling the switch to cell proliferation and growth under nutrient replete conditions and during female oocyte development. GATOR2 probably acts as an E3 ubiquitin-protein ligase toward GATOR1. In the presence of abundant amino acids, the GATOR2 complex mediates ubiquitination of components of the GATOR1 complex, leading to GATOR1 inactivation. This GATOR2 component is required for activating mTORC1 and promoting cell growth in both germline and somatic cells. In addition to its role in regulation of the mTORC1 complex, functions independently of mTORC1 to promote the acidification of lysosomes and facilitates autophagic flux. The sequence is that of GATOR2 complex protein Wdr24 from Drosophila melanogaster (Fruit fly).